A 681-amino-acid polypeptide reads, in one-letter code: Conserved oligomeric Golgi complex subunit 2 (681 aa).

This sequence belongs to the COG2 family. Component of the conserved oligomeric Golgi complex which is composed of eight different subunits and is required for normal Golgi morphology and localization.

The protein localises to the golgi apparatus membrane. Functionally, required for normal Golgi morphology and function. In Caenorhabditis elegans, this protein is Conserved oligomeric Golgi complex subunit 2 (cogc-2).